The primary structure comprises 328 residues: NADH-quinone oxidoreductase subunit H 2 (328 aa).

Helical transmembrane passes span 3–23 (LIVA…ILLL), 77–97 (FLFK…FAAI), 119–139 (VALL…IFGG), 165–185 (MGFA…LDIV), 191–211 (VWNV…GLAE), 250–270 (MVLV…GVLI), 272–292 (LPPL…FMWF), and 307–327 (IGWK…GVVF).

This sequence belongs to the complex I subunit 1 family. In terms of assembly, NDH-1 is composed of 14 different subunits. Subunits NuoA, H, J, K, L, M, N constitute the membrane sector of the complex.

Its subcellular location is the cell inner membrane. It carries out the reaction a quinone + NADH + 5 H(+)(in) = a quinol + NAD(+) + 4 H(+)(out). Its function is as follows. NDH-1 shuttles electrons from NADH, via FMN and iron-sulfur (Fe-S) centers, to quinones in the respiratory chain. The immediate electron acceptor for the enzyme in this species is believed to be ubiquinone. Couples the redox reaction to proton translocation (for every two electrons transferred, four hydrogen ions are translocated across the cytoplasmic membrane), and thus conserves the redox energy in a proton gradient. This subunit may bind ubiquinone. This is NADH-quinone oxidoreductase subunit H 2 from Rhizobium meliloti (strain 1021) (Ensifer meliloti).